Here is a 485-residue protein sequence, read N- to C-terminus: MSYRITGSTGEWEIVVGLEVHAQVVSEAKLFSGASAEYGGEPNTHVSLVDAGFPGMLPVLNRECVAQAVRTGLGLEAEINLFSRFDRKNYFYADLPTGYQISQFAHPIIGKGKVLVDLADGSTREIGVTRLHLEQDAGKSIHDQDPTRSFIDLNRAGVALMEIVSEPDIRSPEEAGAYLRKLRQILRYIGTCDGNMEEGSMRADVNVSVRKPGETEYRTRCEIKNVNSIRFVMMAIEVEAQRQIEVWEAGGTVDQETRLFDHVRGETRSLRSKEDAHDYRYFPDPDLLPLVIEQSWVDELKAALPELPEAKRARLEQEYGVSRYESSVLCVEQAIADFYETVARGADARLAANWMLGDFFAALNRTGRSIEDSPVSAEGLRELLGLISDSTINGKIAKEVLEDMVETGDSASAIVERKGLRQVTDTGAIESAIREILAANSDKVEEYKGGKDKLFGFFVGQTMKAMKGKGNPALVNETLKKLLSE.

It belongs to the GatB/GatE family. GatB subfamily. As to quaternary structure, heterotrimer of A, B and C subunits.

It catalyses the reaction L-glutamyl-tRNA(Gln) + L-glutamine + ATP + H2O = L-glutaminyl-tRNA(Gln) + L-glutamate + ADP + phosphate + H(+). The catalysed reaction is L-aspartyl-tRNA(Asn) + L-glutamine + ATP + H2O = L-asparaginyl-tRNA(Asn) + L-glutamate + ADP + phosphate + 2 H(+). Allows the formation of correctly charged Asn-tRNA(Asn) or Gln-tRNA(Gln) through the transamidation of misacylated Asp-tRNA(Asn) or Glu-tRNA(Gln) in organisms which lack either or both of asparaginyl-tRNA or glutaminyl-tRNA synthetases. The reaction takes place in the presence of glutamine and ATP through an activated phospho-Asp-tRNA(Asn) or phospho-Glu-tRNA(Gln). The sequence is that of Aspartyl/glutamyl-tRNA(Asn/Gln) amidotransferase subunit B from Gluconobacter oxydans (strain 621H) (Gluconobacter suboxydans).